A 277-amino-acid polypeptide reads, in one-letter code: Large ribosomal subunit protein uL2 (277 aa).

Disordered regions lie at residues 24-55 (ITTSTPEKSLLRPLKKKAGRNNQGKLTVRHHG) and 221-277 (RGSV…RKKK).

It belongs to the universal ribosomal protein uL2 family. In terms of assembly, part of the 50S ribosomal subunit. Forms a bridge to the 30S subunit in the 70S ribosome.

One of the primary rRNA binding proteins. Required for association of the 30S and 50S subunits to form the 70S ribosome, for tRNA binding and peptide bond formation. It has been suggested to have peptidyltransferase activity; this is somewhat controversial. Makes several contacts with the 16S rRNA in the 70S ribosome. This is Large ribosomal subunit protein uL2 from Listeria innocua serovar 6a (strain ATCC BAA-680 / CLIP 11262).